Here is a 117-residue protein sequence, read N- to C-terminus: uncharacterized protein (117 aa).

The protein resides in the plastid. It localises to the chloroplast. This is an uncharacterized protein from Chlamydomonas reinhardtii (Chlamydomonas smithii).